The primary structure comprises 388 residues: UDP-N-acetylglucosamine--N-acetylmuramyl-(pentapeptide) pyrophosphoryl-undecaprenol N-acetylglucosamine transferase (388 aa).

Residues 42 to 44 (TGG), Asn-159, Arg-195, Ser-223, Ile-277, and Gln-322 each bind UDP-N-acetyl-alpha-D-glucosamine.

Belongs to the glycosyltransferase 28 family. MurG subfamily.

The protein localises to the cell inner membrane. The catalysed reaction is di-trans,octa-cis-undecaprenyl diphospho-N-acetyl-alpha-D-muramoyl-L-alanyl-D-glutamyl-meso-2,6-diaminopimeloyl-D-alanyl-D-alanine + UDP-N-acetyl-alpha-D-glucosamine = di-trans,octa-cis-undecaprenyl diphospho-[N-acetyl-alpha-D-glucosaminyl-(1-&gt;4)]-N-acetyl-alpha-D-muramoyl-L-alanyl-D-glutamyl-meso-2,6-diaminopimeloyl-D-alanyl-D-alanine + UDP + H(+). It functions in the pathway cell wall biogenesis; peptidoglycan biosynthesis. Its function is as follows. Cell wall formation. Catalyzes the transfer of a GlcNAc subunit on undecaprenyl-pyrophosphoryl-MurNAc-pentapeptide (lipid intermediate I) to form undecaprenyl-pyrophosphoryl-MurNAc-(pentapeptide)GlcNAc (lipid intermediate II). This Albidiferax ferrireducens (strain ATCC BAA-621 / DSM 15236 / T118) (Rhodoferax ferrireducens) protein is UDP-N-acetylglucosamine--N-acetylmuramyl-(pentapeptide) pyrophosphoryl-undecaprenol N-acetylglucosamine transferase.